The primary structure comprises 362 residues: Phosphoserine aminotransferase (362 aa).

Arg-43 contributes to the L-glutamate binding site. Pyridoxal 5'-phosphate-binding positions include 77–78 (AR), Trp-103, Thr-153, Asp-173, and Gln-196. Lys-197 is subject to N6-(pyridoxal phosphate)lysine.

This sequence belongs to the class-V pyridoxal-phosphate-dependent aminotransferase family. SerC subfamily. As to quaternary structure, homodimer. Pyridoxal 5'-phosphate serves as cofactor.

It is found in the cytoplasm. It carries out the reaction O-phospho-L-serine + 2-oxoglutarate = 3-phosphooxypyruvate + L-glutamate. The enzyme catalyses 4-(phosphooxy)-L-threonine + 2-oxoglutarate = (R)-3-hydroxy-2-oxo-4-phosphooxybutanoate + L-glutamate. Its pathway is amino-acid biosynthesis; L-serine biosynthesis; L-serine from 3-phospho-D-glycerate: step 2/3. The protein operates within cofactor biosynthesis; pyridoxine 5'-phosphate biosynthesis; pyridoxine 5'-phosphate from D-erythrose 4-phosphate: step 3/5. Functionally, catalyzes the reversible conversion of 3-phosphohydroxypyruvate to phosphoserine and of 3-hydroxy-2-oxo-4-phosphonooxybutanoate to phosphohydroxythreonine. The chain is Phosphoserine aminotransferase from Legionella pneumophila (strain Corby).